The sequence spans 767 residues: MSLIQLSPSNGDLLLINSGSFSTGKVIRTRNELVFYTDQYGNSTGYRWLGNLPHVINGNSPQTDGGISSTSWESYITSNLYDKLKSENITLSGTAHLPTVEVAYGLKKGSLKVWSAGLVSSSSQYWLYTDGTVWSGVGVLGTEPDVPFTQIHLQRDIIKYNYIVQTDGETLINIPYDFTSIDVFINGVLQNSNSGSYKIIQSTIQFSDVLNKGDNIQFYLSNVPISSVRFALSSDLTNYVLKSDLSNTSGANNVGFYPGGTVQDAIVYTTPEMFGAIGDGITDDTNALQNAINFSKNKTLLFSNGKKYRTKNLIVPHPMTFKGLGRRQDGAIIPYGNVSSESFIHTGTLILLTTSSTVTFYDLTVDARGITLSFVDGQRLTGVGAADNNSGVYQSGLQMYNCNVSGFSGNNLYGGGSKSFGILKDCQFESSGKSCVRIDGVDWRISHCAIGRSLESYGIEILNENNFVSNCDSYFNKLSGIFYQQPTGMAFIKLIGNTINSNGQHGISCSLPYAQPAGTVITNNIFWNNSTELTGTYHNIDLNYGRGHIVENNVHKAYQATAGSDSARCGYCINLRNGATLSGFINDAIDPLYSYVIDKINVNSQNFANQNEISIGTGLSLTKTVSSDTSIGIKLNINSESYDRVQINPGKILLGNGSAEPTHGIQQLAAYPGITMGVLGLGVVGNYSSSVFRIGTHRIWSGGDNTLRTKYGADPTSATDGNILSVKVSVPSTATSTGIVGQWAADDTYLYICTAANTWKRVSINTW.

This sequence in the C-terminal section; belongs to the K30/K69-specific depolymerase family.

The protein resides in the virion. Functionally, functions as a receptor binding protein (RBP) and probably mediates the attachment to the host capsular exopolysaccharides. Displays a depolymerase activity that specifically degrades the K30/K69-type polysaccharides of Klebsiella pneumoniae capsule. The chain is Depolymerase, capsule K30/K69-specific from Klebsiella phage K64-1 (Bacteriophage K64-1).